We begin with the raw amino-acid sequence, 290 residues long: MAECDGKCDTCPSKNTCPDTKKLLAQQDAKIRENMSKIKHKIVILSGKGGVGKSTVTVNLAAALNLMGKKVGVLDADIHGPNIPKMLGVENTQPMAGPAGIFPIVTKDGIKTMSIGYLLPDDKTPVIWRGPKVSGAIRQFLSDVVWGELDYLLIDTPPGTGDEQLTIMQSIPDIDGAIIVTTPEEVSVLDVKKSIMMAKMLNIPIIGIIENMSGFVCPYCNKVVDIFGRGGGEKAAKELGVEFLGRIPLDIKAREASDKGIPMVLLDCKASEEFKKIVKRIVEKVEGKKE.

Residue 47 to 54 (GKGGVGKS) coordinates ATP.

Belongs to the Mrp/NBP35 ATP-binding proteins family. As to quaternary structure, homodimer.

Functionally, binds and transfers iron-sulfur (Fe-S) clusters to target apoproteins. Can hydrolyze ATP. In Methanocaldococcus jannaschii (strain ATCC 43067 / DSM 2661 / JAL-1 / JCM 10045 / NBRC 100440) (Methanococcus jannaschii), this protein is Iron-sulfur cluster carrier protein.